A 349-amino-acid polypeptide reads, in one-letter code: Histidinol-phosphate aminotransferase (349 aa).

K206 carries the post-translational modification N6-(pyridoxal phosphate)lysine.

This sequence belongs to the class-II pyridoxal-phosphate-dependent aminotransferase family. Histidinol-phosphate aminotransferase subfamily. In terms of assembly, homodimer. Pyridoxal 5'-phosphate serves as cofactor.

It catalyses the reaction L-histidinol phosphate + 2-oxoglutarate = 3-(imidazol-4-yl)-2-oxopropyl phosphate + L-glutamate. The protein operates within amino-acid biosynthesis; L-histidine biosynthesis; L-histidine from 5-phospho-alpha-D-ribose 1-diphosphate: step 7/9. The protein is Histidinol-phosphate aminotransferase of Streptococcus mutans serotype c (strain ATCC 700610 / UA159).